We begin with the raw amino-acid sequence, 187 residues long: UPF0301 protein Cpar_0662 (187 aa).

This sequence belongs to the UPF0301 (AlgH) family.

The sequence is that of UPF0301 protein Cpar_0662 from Chlorobaculum parvum (strain DSM 263 / NCIMB 8327) (Chlorobium vibrioforme subsp. thiosulfatophilum).